Consider the following 241-residue polypeptide: Ubiquinone biosynthesis O-methyltransferase (241 aa).

Residues arginine 44, glycine 64, aspartate 85, and methionine 129 each contribute to the S-adenosyl-L-methionine site.

The protein belongs to the methyltransferase superfamily. UbiG/COQ3 family.

The catalysed reaction is a 3-demethylubiquinol + S-adenosyl-L-methionine = a ubiquinol + S-adenosyl-L-homocysteine + H(+). It carries out the reaction a 3-(all-trans-polyprenyl)benzene-1,2-diol + S-adenosyl-L-methionine = a 2-methoxy-6-(all-trans-polyprenyl)phenol + S-adenosyl-L-homocysteine + H(+). It participates in cofactor biosynthesis; ubiquinone biosynthesis. Its function is as follows. O-methyltransferase that catalyzes the 2 O-methylation steps in the ubiquinone biosynthetic pathway. This Serratia proteamaculans (strain 568) protein is Ubiquinone biosynthesis O-methyltransferase.